The following is a 1219-amino-acid chain: Cullin-associated NEDD8-dissociated protein 1 (1219 aa).

Ala-2 is modified (N-acetylalanine). HEAT repeat units lie at residues 44–81, 83–119, 209–244, 248–288, 327–363, 367–404, 423–460, 464–503, 599–636, 639–676, 808–848, 850–883, 927–964, 966–998, 1002–1039, 1043–1079, 1101–1137, and 1141–1180; these read DLEV…KVGE, RIVE…QIAP, KATV…AVGY, THLG…RCPR, EEDD…SRSE, KVYQ…QTGN, QEVS…VLPD, DHIG…SHAP, AELP…LHIN, CVLD…AYGD, KNCS…RKDL, AHAG…IAVG, SSVE…IEPE, LVPA…ERPE, EIIF…YKPN, GLLP…DDGL, NPSS…KCPS, and AVLD…ALRA. The segment at 311–340 is disordered; the sequence is FTDNMEEDTDNETLEDEEDDESANEYTDDE. A compositionally biased stretch (acidic residues) spans 314-340; that stretch reads NMEEDTDNETLEDEEDDESANEYTDDE.

Belongs to the CAND family. Interacts with CUL1 and CUL4. Binds unneddylated CUL1, but cannot bind CUL1 once it has been neddylated. In terms of tissue distribution, highly expressed in roots. Expressed in stems, flowers and siliques.

Key assembly factor of SCF (SKP1-CUL1-F-box protein) E3 ubiquitin ligase complexes that promotes the exchange of the substrate-recognition F-box subunit in SCF complexes, thereby playing a key role in the cellular repertoire of SCF complexes. Acts as a F-box protein exchange factor. Required for SCF(TIR1) function. Modulates SCF(TIR1) function through its interactions with the CUL1 subunit. Represses photomorphogenesis by promoting HY5 degradation in darkness. The protein is Cullin-associated NEDD8-dissociated protein 1 (CAND1) of Arabidopsis thaliana (Mouse-ear cress).